An 89-amino-acid chain; its full sequence is Elongation factor 1-beta (89 aa).

This sequence belongs to the EF-1-beta/EF-1-delta family.

Its function is as follows. Promotes the exchange of GDP for GTP in EF-1-alpha/GDP, thus allowing the regeneration of EF-1-alpha/GTP that could then be used to form the ternary complex EF-1-alpha/GTP/AAtRNA. The polypeptide is Elongation factor 1-beta (Methanococcoides burtonii (strain DSM 6242 / NBRC 107633 / OCM 468 / ACE-M)).